The sequence spans 154 residues: 6,7-dimethyl-8-ribityllumazine synthase (154 aa).

5-amino-6-(D-ribitylamino)uracil is bound by residues F26, 60 to 62, and 84 to 86; these read ALE and CII. 89–90 is a (2S)-2-hydroxy-3-oxobutyl phosphate binding site; sequence ET. H92 serves as the catalytic Proton donor. N117 provides a ligand contact to 5-amino-6-(D-ribitylamino)uracil. Residue R131 participates in (2S)-2-hydroxy-3-oxobutyl phosphate binding.

This sequence belongs to the DMRL synthase family.

It carries out the reaction (2S)-2-hydroxy-3-oxobutyl phosphate + 5-amino-6-(D-ribitylamino)uracil = 6,7-dimethyl-8-(1-D-ribityl)lumazine + phosphate + 2 H2O + H(+). It functions in the pathway cofactor biosynthesis; riboflavin biosynthesis; riboflavin from 2-hydroxy-3-oxobutyl phosphate and 5-amino-6-(D-ribitylamino)uracil: step 1/2. Functionally, catalyzes the formation of 6,7-dimethyl-8-ribityllumazine by condensation of 5-amino-6-(D-ribitylamino)uracil with 3,4-dihydroxy-2-butanone 4-phosphate. This is the penultimate step in the biosynthesis of riboflavin. The protein is 6,7-dimethyl-8-ribityllumazine synthase of Acidovorax ebreus (strain TPSY) (Diaphorobacter sp. (strain TPSY)).